Consider the following 331-residue polypeptide: Endo-1,4-beta-xylanase 2 (331 aa).

The signal sequence occupies residues 1–17 (MKASSVLLGLAPLAALA). Residues 31-329 (QQSIDALMKA…KPAYNSVVQA (299 aa)) form the GH10 domain. N-linked (GlcNAc...) asparagine glycosylation is present at Asn-105. Glu-159 acts as the Proton donor in catalysis. The Nucleophile role is filled by Glu-266. Cys-284 and Cys-290 are joined by a disulfide. N-linked (GlcNAc...) asparagine glycosylation is present at Asn-301.

The protein belongs to the glycosyl hydrolase 10 (cellulase F) family.

It localises to the secreted. The catalysed reaction is Endohydrolysis of (1-&gt;4)-beta-D-xylosidic linkages in xylans.. Its pathway is glycan degradation; xylan degradation. Endo-1,4-beta-xylanase involved in the hydrolysis of xylan, a major structural heterogeneous polysaccharide found in plant biomass representing the second most abundant polysaccharide in the biosphere, after cellulose. Accounts for approximately 70 percent of the endoxylanase activity in the culture filtrate. This chain is Endo-1,4-beta-xylanase 2 (XYL2), found in Pyricularia grisea (Crabgrass-specific blast fungus).